Here is a 264-residue protein sequence, read N- to C-terminus: Thymidylate synthase (264 aa).

Position 21 (R21) interacts with dUMP. Residue H51 coordinates (6R)-5,10-methylene-5,6,7,8-tetrahydrofolate. R126–R127 contributes to the dUMP binding site. Catalysis depends on C146, which acts as the Nucleophile. DUMP contacts are provided by residues R166–D169, N177, and H207–Y209. D169 lines the (6R)-5,10-methylene-5,6,7,8-tetrahydrofolate pocket. A (6R)-5,10-methylene-5,6,7,8-tetrahydrofolate-binding site is contributed by S263.

It belongs to the thymidylate synthase family. Bacterial-type ThyA subfamily. In terms of assembly, homodimer.

The protein localises to the cytoplasm. The enzyme catalyses dUMP + (6R)-5,10-methylene-5,6,7,8-tetrahydrofolate = 7,8-dihydrofolate + dTMP. It participates in pyrimidine metabolism; dTTP biosynthesis. Functionally, catalyzes the reductive methylation of 2'-deoxyuridine-5'-monophosphate (dUMP) to 2'-deoxythymidine-5'-monophosphate (dTMP) while utilizing 5,10-methylenetetrahydrofolate (mTHF) as the methyl donor and reductant in the reaction, yielding dihydrofolate (DHF) as a by-product. This enzymatic reaction provides an intracellular de novo source of dTMP, an essential precursor for DNA biosynthesis. This chain is Thymidylate synthase, found in Neisseria meningitidis serogroup B (strain ATCC BAA-335 / MC58).